We begin with the raw amino-acid sequence, 64 residues long: Large ribosomal subunit protein uL30 (64 aa).

Belongs to the universal ribosomal protein uL30 family. As to quaternary structure, part of the 50S ribosomal subunit.

This Bdellovibrio bacteriovorus (strain ATCC 15356 / DSM 50701 / NCIMB 9529 / HD100) protein is Large ribosomal subunit protein uL30.